The primary structure comprises 179 residues: Large ribosomal subunit protein uL5 (179 aa).

It belongs to the universal ribosomal protein uL5 family. In terms of assembly, part of the 50S ribosomal subunit; part of the 5S rRNA/L5/L18/L25 subcomplex. Contacts the 5S rRNA and the P site tRNA. Forms a bridge to the 30S subunit in the 70S ribosome.

This is one of the proteins that bind and probably mediate the attachment of the 5S RNA into the large ribosomal subunit, where it forms part of the central protuberance. In the 70S ribosome it contacts protein S13 of the 30S subunit (bridge B1b), connecting the 2 subunits; this bridge is implicated in subunit movement. Contacts the P site tRNA; the 5S rRNA and some of its associated proteins might help stabilize positioning of ribosome-bound tRNAs. This is Large ribosomal subunit protein uL5 from Dehalococcoides mccartyi (strain ATCC BAA-2100 / JCM 16839 / KCTC 5957 / BAV1).